The primary structure comprises 282 residues: MAELLTLREAVERFVNDGDTVALEGFTHLIPTAASHEIIRQGKKDLHLVRMTPDLVYDLLIGAGCARKLTFSWGGNPGVGSLHRLRDAVEKGWPNALEIDEHSHADLANSYVAGASGLPFAVLRAYAGSDLPKVNPNIKFINCPFTGEQLAAVPSVRPDVTVIHAQKADRKGNVLLWGILGVQKEAALAAKRCIVTVEEIVDDLNAPMNSCVLPTWALSAVCHVPGGSHPSYAHGYYERDNRFYQAWDPIARDRETFTAWIDEYIRGTKDFSEFQAKIAEGK.

This sequence belongs to the 3-oxoacid CoA-transferase subunit A family. Heterotetramer composed of 2 A and 2 B subunits.

It carries out the reaction 3-oxoadipate + succinyl-CoA = 3-oxoadipyl-CoA + succinate. It participates in aromatic compound metabolism; beta-ketoadipate pathway; acetyl-CoA and succinyl-CoA from 3-oxoadipate: step 1/2. Its function is as follows. Catalyzes the CoA transfer from succinate to 3-oxoadipate (beta-ketoadipate). The protein is 3-oxoadipate CoA-transferase subunit A (catI) of Pseudomonas knackmussii (strain DSM 6978 / CCUG 54928 / LMG 23759 / B13).